The following is a 77-amino-acid chain: DNA-directed RNA polymerase subunit epsilon (77 aa).

The protein belongs to the RNA polymerase subunit epsilon family. RNAP is composed of a core of 2 alpha, a beta and a beta' subunit. The core is associated with a delta subunit, and at least one of epsilon or omega. When a sigma factor is associated with the core the holoenzyme is formed, which can initiate transcription.

The catalysed reaction is RNA(n) + a ribonucleoside 5'-triphosphate = RNA(n+1) + diphosphate. In terms of biological role, a non-essential component of RNA polymerase (RNAP). The polypeptide is DNA-directed RNA polymerase subunit epsilon (Lactobacillus delbrueckii subsp. bulgaricus (strain ATCC 11842 / DSM 20081 / BCRC 10696 / JCM 1002 / NBRC 13953 / NCIMB 11778 / NCTC 12712 / WDCM 00102 / Lb 14)).